The primary structure comprises 353 residues: D-alanine--D-alanine ligase (353 aa).

The ATP-grasp domain maps to Lys135 to Gln344. Glu171 to Glu226 provides a ligand contact to ATP. The Mg(2+) site is built by Asp297, Glu311, and Asn313.

The protein belongs to the D-alanine--D-alanine ligase family. It depends on Mg(2+) as a cofactor. The cofactor is Mn(2+).

The protein resides in the cytoplasm. The catalysed reaction is 2 D-alanine + ATP = D-alanyl-D-alanine + ADP + phosphate + H(+). It functions in the pathway cell wall biogenesis; peptidoglycan biosynthesis. Its function is as follows. Cell wall formation. The chain is D-alanine--D-alanine ligase from Picosynechococcus sp. (strain ATCC 27264 / PCC 7002 / PR-6) (Agmenellum quadruplicatum).